We begin with the raw amino-acid sequence, 72 residues long: Translation initiation factor IF-1 (72 aa).

Residues Met-1–Lys-72 enclose the S1-like domain.

Belongs to the IF-1 family. In terms of assembly, component of the 30S ribosomal translation pre-initiation complex which assembles on the 30S ribosome in the order IF-2 and IF-3, IF-1 and N-formylmethionyl-tRNA(fMet); mRNA recruitment can occur at any time during PIC assembly.

It is found in the cytoplasm. Its function is as follows. One of the essential components for the initiation of protein synthesis. Stabilizes the binding of IF-2 and IF-3 on the 30S subunit to which N-formylmethionyl-tRNA(fMet) subsequently binds. Helps modulate mRNA selection, yielding the 30S pre-initiation complex (PIC). Upon addition of the 50S ribosomal subunit IF-1, IF-2 and IF-3 are released leaving the mature 70S translation initiation complex. The polypeptide is Translation initiation factor IF-1 (Acidiphilium cryptum (strain JF-5)).